We begin with the raw amino-acid sequence, 610 residues long: Chaperone protein DnaK (610 aa).

Position 173 is a phosphothreonine; by autocatalysis (Thr-173). A compositionally biased stretch (low complexity) spans 579–592 (QQQQAQGANAGQNN). A disordered region spans residues 579–610 (QQQQAQGANAGQNNDSTVEDAEFKEVKDDDKK). The segment covering 599–610 (AEFKEVKDDDKK) has biased composition (basic and acidic residues).

This sequence belongs to the heat shock protein 70 family.

Its function is as follows. Acts as a chaperone. The chain is Chaperone protein DnaK from Staphylococcus aureus (strain bovine RF122 / ET3-1).